Here is a 289-residue protein sequence, read N- to C-terminus: Acetyl-coenzyme A carboxylase carboxyl transferase subunit beta (289 aa).

In terms of domain architecture, CoA carboxyltransferase N-terminal spans 34–289 (MWVKCNKCGE…KLINMHQNSF (256 aa)). Zn(2+) contacts are provided by Cys-38, Cys-41, Cys-57, and Cys-60. Residues 38 to 60 (CNKCGEILYQNDLEKNYMVCNLC) form a C4-type zinc finger.

Belongs to the AccD/PCCB family. Acetyl-CoA carboxylase is a heterohexamer composed of biotin carboxyl carrier protein (AccB), biotin carboxylase (AccC) and two subunits each of ACCase subunit alpha (AccA) and ACCase subunit beta (AccD). It depends on Zn(2+) as a cofactor.

Its subcellular location is the cytoplasm. It carries out the reaction N(6)-carboxybiotinyl-L-lysyl-[protein] + acetyl-CoA = N(6)-biotinyl-L-lysyl-[protein] + malonyl-CoA. It participates in lipid metabolism; malonyl-CoA biosynthesis; malonyl-CoA from acetyl-CoA: step 1/1. In terms of biological role, component of the acetyl coenzyme A carboxylase (ACC) complex. Biotin carboxylase (BC) catalyzes the carboxylation of biotin on its carrier protein (BCCP) and then the CO(2) group is transferred by the transcarboxylase to acetyl-CoA to form malonyl-CoA. In Clostridium botulinum (strain Okra / Type B1), this protein is Acetyl-coenzyme A carboxylase carboxyl transferase subunit beta.